A 146-amino-acid chain; its full sequence is Hemoglobin subunit beta (146 aa).

The Globin domain maps to 2-146 (HWSAEEKQLI…VAHALARKYH (145 aa)). Residues His-63 and His-92 each coordinate heme b.

Belongs to the globin family. Heterotetramer of two alpha chains and two beta chains. Red blood cells.

Functionally, involved in oxygen transport from the lung to the various peripheral tissues. This chain is Hemoglobin subunit beta (HBB), found in Anser anser anser (Western greylag goose).